The primary structure comprises 37 residues: Large ribosomal subunit protein bL36c (37 aa).

Belongs to the bacterial ribosomal protein bL36 family.

It is found in the plastid. It localises to the chloroplast. The polypeptide is Large ribosomal subunit protein bL36c (Oenothera argillicola (Appalachian evening primrose)).